The primary structure comprises 386 residues: Agamous-like MADS-box protein AGL30 (386 aa).

The 53-residue stretch at 1–53 (MGRVKLKIKKLENTNGRQSTFAKRKNGILKKANELSILCDIDIVLLMFSPTGK) folds into the MADS-box domain. Residues 341–360 (PDSSAYNDNTNQTRFGSSSS) are disordered. Positions 344–356 (SAYNDNTNQTRFG) are enriched in polar residues.

In terms of assembly, forms heterodimers with AGL66 and AGL104. In terms of tissue distribution, expressed in pollen.

It localises to the nucleus. Functionally, probable transcription factor that forms heterodimers with the MADS-box proteins AGL66 and AGL104 and is involved in the regulation of pollen maturation at the late stages of pollen development and pollen tube growth. The sequence is that of Agamous-like MADS-box protein AGL30 from Arabidopsis thaliana (Mouse-ear cress).